We begin with the raw amino-acid sequence, 61 residues long: UPF0434 protein Pput_3813 (61 aa).

Belongs to the UPF0434 family.

This Pseudomonas putida (strain ATCC 700007 / DSM 6899 / JCM 31910 / BCRC 17059 / LMG 24140 / F1) protein is UPF0434 protein Pput_3813.